We begin with the raw amino-acid sequence, 306 residues long: Methionyl-tRNA formyltransferase (306 aa).

108 to 111 contacts (6S)-5,6,7,8-tetrahydrofolate; sequence SLLP.

Belongs to the Fmt family.

It catalyses the reaction L-methionyl-tRNA(fMet) + (6R)-10-formyltetrahydrofolate = N-formyl-L-methionyl-tRNA(fMet) + (6S)-5,6,7,8-tetrahydrofolate + H(+). In terms of biological role, attaches a formyl group to the free amino group of methionyl-tRNA(fMet). The formyl group appears to play a dual role in the initiator identity of N-formylmethionyl-tRNA by promoting its recognition by IF2 and preventing the misappropriation of this tRNA by the elongation apparatus. The sequence is that of Methionyl-tRNA formyltransferase from Arthrobacter sp. (strain FB24).